We begin with the raw amino-acid sequence, 453 residues long: Dihydrolipoyllysine-residue succinyltransferase component of 2-oxoglutarate dehydrogenase complex, mitochondrial (453 aa).

The transit peptide at 1–67 (MLSRSRCVSR…RFFRTTAVCK (67 aa)) directs the protein to the mitochondrion. A Lipoyl-binding domain is found at 70 to 144 (LVTVKTPAFA…EGGTPLFTLR (75 aa)). At Ser-81 the chain carries Phosphoserine. Lys-110 bears the N6-lipoyllysine mark. A compositionally biased stretch (low complexity) spans 152–172 (KAKPAEAPAAAAPKAEPTAAA). The segment at 152–225 (KAKPAEAPAA…GKGLRSEHRE (74 aa)) is disordered. Lys-154 carries the N6-acetyllysine modification. Pro residues predominate over residues 173–196 (VPPPAAPIPTQMPPVPSPSQPPSG). Lys-267, Lys-272, Lys-273, Lys-277, and Lys-307 each carry N6-acetyllysine. Active-site residues include His-424 and Asp-428.

The protein belongs to the 2-oxoacid dehydrogenase family. As to quaternary structure, the 2-oxoglutarate dehydrogenase complex is composed of OGDH (2-oxoglutarate dehydrogenase; E1), DLST (dihydrolipoamide succinyltransferase; E2), DLD (dihydrolipoamide dehydrogenase; E3) and the assembly factor KGD4. It contains multiple copies of the three enzymatic components (E1, E2 and E3). In the nucleus, the 2-oxoglutarate dehydrogenase complex associates with KAT2A. Interacts with ABHD11; this interaction maintains the functional lipoylation of the 2-oxoglutarate dehydrogenase complex. (R)-lipoate serves as cofactor.

The protein resides in the mitochondrion matrix. Its subcellular location is the nucleus. The enzyme catalyses N(6)-[(R)-dihydrolipoyl]-L-lysyl-[protein] + succinyl-CoA = N(6)-[(R)-S(8)-succinyldihydrolipoyl]-L-lysyl-[protein] + CoA. It functions in the pathway amino-acid degradation; L-lysine degradation via saccharopine pathway; glutaryl-CoA from L-lysine: step 6/6. It participates in carbohydrate metabolism; tricarboxylic acid cycle. Functionally, dihydrolipoamide succinyltransferase (E2) component of the 2-oxoglutarate dehydrogenase complex. The 2-oxoglutarate dehydrogenase complex catalyzes the overall conversion of 2-oxoglutarate to succinyl-CoA and CO(2). The 2-oxoglutarate dehydrogenase complex is mainly active in the mitochondrion. A fraction of the 2-oxoglutarate dehydrogenase complex also localizes in the nucleus and is required for lysine succinylation of histones: associates with KAT2A on chromatin and provides succinyl-CoA to histone succinyltransferase KAT2A. This is Dihydrolipoyllysine-residue succinyltransferase component of 2-oxoglutarate dehydrogenase complex, mitochondrial from Homo sapiens (Human).